Consider the following 132-residue polypeptide: Small ribosomal subunit protein uS11 (132 aa).

This sequence belongs to the universal ribosomal protein uS11 family. In terms of assembly, part of the 30S ribosomal subunit. Interacts with proteins S7 and S18. Binds to IF-3.

Located on the platform of the 30S subunit, it bridges several disparate RNA helices of the 16S rRNA. Forms part of the Shine-Dalgarno cleft in the 70S ribosome. The polypeptide is Small ribosomal subunit protein uS11 (Oenococcus oeni (strain ATCC BAA-331 / PSU-1)).